Here is a 393-residue protein sequence, read N- to C-terminus: Pyrimidine monooxygenase RutA (393 aa).

FMN is bound by residues 79–80 (IK), Asn145, Glu154, 170–171 (RY), and Ser220.

The protein belongs to the NtaA/SnaA/DszA monooxygenase family. RutA subfamily.

It catalyses the reaction uracil + FMNH2 + NADH + O2 = (Z)-3-ureidoacrylate + FMN + NAD(+) + H2O + H(+). It carries out the reaction thymine + FMNH2 + NADH + O2 = (Z)-2-methylureidoacrylate + FMN + NAD(+) + H2O + H(+). In terms of biological role, catalyzes the pyrimidine ring opening between N-3 and C-4 by an unusual flavin hydroperoxide-catalyzed mechanism, adding oxygen atoms in the process to yield ureidoacrylate peracid, that immediately reacts with FMN forming ureidoacrylate and FMN-N(5)-oxide. The FMN-N(5)-oxide reacts spontaneously with NADH to produce FMN. Requires the flavin reductase RutF to regenerate FMN in vivo. The protein is Pyrimidine monooxygenase RutA of Escherichia coli O18:K1:H7 (strain IHE3034 / ExPEC).